Here is a 305-residue protein sequence, read N- to C-terminus: tRNA uridine(34) hydroxylase (305 aa).

A Rhodanese domain is found at 125–219 (ADENTVVVDT…YLEEVPREQS (95 aa)). Residue C179 is the Cysteine persulfide intermediate of the active site.

This sequence belongs to the TrhO family.

It catalyses the reaction uridine(34) in tRNA + AH2 + O2 = 5-hydroxyuridine(34) in tRNA + A + H2O. In terms of biological role, catalyzes oxygen-dependent 5-hydroxyuridine (ho5U) modification at position 34 in tRNAs. The polypeptide is tRNA uridine(34) hydroxylase (Brucella suis (strain ATCC 23445 / NCTC 10510)).